The following is a 190-amino-acid chain: Protein A52 (190 aa).

It belongs to the orthopoxvirus A52R protein family. As to quaternary structure, interacts with host TRAF6 and IRAK2.

In terms of biological role, bcl-2-like protein which targets host toll-like receptor signaling complexes to suppress innate immune response. Interacts with host TRAF6 to activate p38 and subsequently induce the expression of several cytokines such as IL-10. Also associates with host IRAK2 to inhibit NF-kappa-B signaling. This is Protein A52 from Homo sapiens (Human).